The sequence spans 631 residues: Phosphomethylpyrimidine synthase (631 aa).

Substrate-binding positions include Asn-239, Met-268, Tyr-297, His-333, 353 to 355 (SRG), 394 to 397 (DGLR), and Glu-433. His-437 lines the Zn(2+) pocket. Tyr-460 contributes to the substrate binding site. His-501 contributes to the Zn(2+) binding site. [4Fe-4S] cluster contacts are provided by Cys-581, Cys-584, and Cys-589.

It belongs to the ThiC family. As to quaternary structure, homodimer. [4Fe-4S] cluster serves as cofactor.

The catalysed reaction is 5-amino-1-(5-phospho-beta-D-ribosyl)imidazole + S-adenosyl-L-methionine = 4-amino-2-methyl-5-(phosphooxymethyl)pyrimidine + CO + 5'-deoxyadenosine + formate + L-methionine + 3 H(+). It functions in the pathway cofactor biosynthesis; thiamine diphosphate biosynthesis. Functionally, catalyzes the synthesis of the hydroxymethylpyrimidine phosphate (HMP-P) moiety of thiamine from aminoimidazole ribotide (AIR) in a radical S-adenosyl-L-methionine (SAM)-dependent reaction. This chain is Phosphomethylpyrimidine synthase, found in Escherichia fergusonii (strain ATCC 35469 / DSM 13698 / CCUG 18766 / IAM 14443 / JCM 21226 / LMG 7866 / NBRC 102419 / NCTC 12128 / CDC 0568-73).